The primary structure comprises 812 residues: cAMP-regulated phosphoprotein 21 (812 aa).

A disordered region spans residues 1–130 (MSEQGDLNQA…KDKTSEKPKI (130 aa)). Position 2 is an N-acetylserine (Ser2). Low complexity predominate over residues 9–25 (QAIAEEGGTEQETATPE). The stretch at 32 to 58 (ESLDEEEKLELQRRLEAQNQERRKSKS) forms a coiled coil. Residue Ser33 is modified to Phosphoserine. Basic and acidic residues predominate over residues 40 to 53 (LELQRRLEAQNQER). Ser56 is subject to Phosphoserine. Positions 90-100 (IHLQLSSFSSL) are enriched in low complexity. Over residues 102–130 (EEDKSRKDDSEREKEKDKNKDKTSEKPKI) the composition is skewed to basic and acidic residues. At Ser134 the chain carries Phosphoserine. Residues 164-227 (RMILLKMEQE…SVIINKTSST (64 aa)) enclose the R3H domain. In terms of domain architecture, SUZ spans 228–300 (RIPEQRFCEH…VRERIFAHDS (73 aa)). The tract at residues 246 to 281 (SQKRFILKRDNSSIDKEDNQQNRMHPFRDDRRSKSI) is disordered. Phosphoserine is present on Ser300. Disordered regions lie at residues 332–436 (RGNR…PLVS), 485–544 (HTGQ…MAGP), and 561–632 (LSRQ…QQPP). Positions 339-349 (GRTSGSRQSSS) are enriched in low complexity. The span at 351–360 (NELKWSDHQR) shows a compositional bias: basic and acidic residues. The segment covering 361-373 (AWSSTDSDSSNRN) has biased composition (polar residues). Ser363 and Ser383 each carry phosphoserine. Positions 391–423 (TRGDSTSSTRSTGKLSKAGSESSSSAGSSGSLS) are enriched in low complexity. Ser562 is subject to Phosphoserine. Residues 582–602 (LMPQPAQQPSYVIASTGQQLP) are compositionally biased toward polar residues. Positions 619-632 (QPPPSPQGFVQQPP) are enriched in pro residues. Asymmetric dimethylarginine is present on Arg655.

Interacts with CALM1. Phosphorylation at Ser-56 favors interaction with CALM1. Post-translationally, isoform 1 is methylated by CARM1 at Arg-655 in immature thymocytes. In terms of tissue distribution, isoform 2 is expressed in brain. Isoform 1 is present in immature thymocytes (at protein level).

Its subcellular location is the cytoplasm. In terms of biological role, isoform 2 may act as a competitive inhibitor of calmodulin-dependent enzymes such as calcineurin in neurons. This is cAMP-regulated phosphoprotein 21 (ARPP21) from Homo sapiens (Human).